A 347-amino-acid polypeptide reads, in one-letter code: Protein FAM50 homolog (347 aa).

Basic and acidic residues predominate over residues glutamate 77 to arginine 113. The tract at residues glutamate 77–lysine 142 is disordered. A compositionally biased stretch (acidic residues) spans proline 123–proline 138.

It belongs to the FAM50 family.

This Aedes aegypti (Yellowfever mosquito) protein is Protein FAM50 homolog.